Here is a 203-residue protein sequence, read N- to C-terminus: Probable nicotinate-nucleotide adenylyltransferase (203 aa).

This sequence belongs to the NadD family.

The enzyme catalyses nicotinate beta-D-ribonucleotide + ATP + H(+) = deamido-NAD(+) + diphosphate. The protein operates within cofactor biosynthesis; NAD(+) biosynthesis; deamido-NAD(+) from nicotinate D-ribonucleotide: step 1/1. Catalyzes the reversible adenylation of nicotinate mononucleotide (NaMN) to nicotinic acid adenine dinucleotide (NaAD). The sequence is that of Probable nicotinate-nucleotide adenylyltransferase from Prosthecochloris aestuarii (strain DSM 271 / SK 413).